The sequence spans 602 residues: MFPRRLDSPAAYGIAQAMMDGFDRHYRLFRAESARAKHRFETSDWSGQQRAQRERIEFYDLRVKECVRRLEKEFSAGAQPMDVWHQVKLHYIGLLVGHRQPELAETFFNSVTTKILHRTHFHNDFIFVRPAISTEYLENDEPGARPTYRAYYPTPESLQETLVRVVDNFQLQGEFEDLARDAGRVAEVMRPRLGPAKWRANFQIQVLSSLFYRNKGAYLVGKVINGFQELAFALPILHGTDGRYVIDAALFGEDDLQMLFSFARAYFMVDMEIPSAYVQFLRSLMPRKPRAELYNALGLAKQGKTLFYRDFLHHLRYSSDRFRIAPGIKGMVMLVFDLPSFPFVFKVIKDYYPPQKDTTREQIKGKYLLVKQHDRVGRMADTLEYSEVAFPRERFEDDLIAEIEKFAPSQLEISDRDGDGNVEVILKHVYIERRMIPLNIYLQEAFDAGPHDARARQQMERSVVEYGNAIKDLVAANIFPGDMLWKNFGVTRNGKVVFYDYDEIEYLTDCHFRRVPAPRNEEDELSGEVWWAVGPRDVFPETFGPFLLGNDAVREVFMRHHADLLDPVFWQSHKERIQAGHMYDVFPYDPERRFGAGTGSPA.

Residues 325–331 (APGIKGM) and lysine 346 each bind ATP. The active site involves aspartate 381.

The protein belongs to the AceK family.

The protein localises to the cytoplasm. It carries out the reaction L-seryl-[isocitrate dehydrogenase] + ATP = O-phospho-L-seryl-[isocitrate dehydrogenase] + ADP + H(+). Its function is as follows. Bifunctional enzyme which can phosphorylate or dephosphorylate isocitrate dehydrogenase (IDH) on a specific serine residue. This is a regulatory mechanism which enables bacteria to bypass the Krebs cycle via the glyoxylate shunt in response to the source of carbon. When bacteria are grown on glucose, IDH is fully active and unphosphorylated, but when grown on acetate or ethanol, the activity of IDH declines drastically concomitant with its phosphorylation. The protein is Isocitrate dehydrogenase kinase/phosphatase of Paracidovorax citrulli (strain AAC00-1) (Acidovorax citrulli).